We begin with the raw amino-acid sequence, 962 residues long: AP2-associated protein kinase 1 (962 aa).

Methionine 1 is modified (N-acetylmethionine). The segment covering methionine 1–glutamine 11 has biased composition (basic and acidic residues). Residues methionine 1 to serine 27 form a disordered region. Serine 14 is subject to Phosphoserine. Gly residues predominate over residues serine 14 to serine 27. One can recognise a Protein kinase domain in the interval valine 46–leucine 314. Residues leucine 52 to valine 60 and lysine 74 contribute to the ATP site. Residue aspartate 176 is the Proton acceptor of the active site. Tyrosine 234 is modified (phosphotyrosine). Serine 235 bears the Phosphoserine mark. 2 disordered regions span residues asparagine 325–alanine 515 and proline 576–histidine 633. Residues threonine 353 and threonine 388 each carry the phosphothreonine modification. At arginine 390 the chain carries Omega-N-methylarginine. The segment covering proline 397 to lysine 418 has biased composition (polar residues). Low complexity predominate over residues alanine 419–glutamine 434. Residues proline 435–threonine 444 are compositionally biased toward pro residues. Threonine 440 carries the phosphothreonine modification. Low complexity-rich tracts occupy residues proline 445–glutamine 485, glutamine 498–glutamine 514, and proline 576–threonine 606. A Phosphothreonine modification is found at threonine 607. The span at glycine 614–threonine 628 shows a compositional bias: polar residues. Serine 619 is modified (phosphoserine). Threonine 621 bears the Phosphothreonine mark. A phosphoserine mark is found at serine 624, serine 625, serine 638, and serine 651. A Phosphothreonine modification is found at threonine 654. The segment covering alanine 664 to serine 677 has biased composition (low complexity). The disordered stretch occupies residues alanine 664–aspartate 702. Residues glycine 678–asparagine 697 show a composition bias toward polar residues. Phosphoserine is present on residues serine 732, serine 847, serine 938, and serine 939. Residues glutamate 824–aspartate 961 form a clathrin-binding domain (CBD) region. 2 disordered regions span residues proline 839–leucine 860 and leucine 925–leucine 946. Residues proline 846–leucine 860 are compositionally biased toward polar residues. Positions glycine 932 to serine 945 are enriched in low complexity.

The protein belongs to the protein kinase superfamily. Ser/Thr protein kinase family. In terms of assembly, interacts (via CBD domain) with clathrin. Interacts with AP-2 complex. Interacts with NUMB. Interacts with alpha-adaptin. Interacts with EPS15. Interacts with membrane-bound activated NOTCH1 but not with the inactive full-length form of NOTCH1. Preferentially interacts with monoubiquitinated activated NOTCH1 compared to the non-ubiquitinated form. Autophosphorylated.

It localises to the cell membrane. The protein localises to the membrane. It is found in the clathrin-coated pit. Its subcellular location is the presynapse. It catalyses the reaction L-seryl-[protein] + ATP = O-phospho-L-seryl-[protein] + ADP + H(+). The enzyme catalyses L-threonyl-[protein] + ATP = O-phospho-L-threonyl-[protein] + ADP + H(+). With respect to regulation, stimulated by clathrin. In terms of biological role, regulates clathrin-mediated endocytosis by phosphorylating the AP2M1/mu2 subunit of the adaptor protein complex 2 (AP-2) which ensures high affinity binding of AP-2 to cargo membrane proteins during the initial stages of endocytosis. Preferentially, may phosphorylate substrates on threonine residues. Regulates phosphorylation of other AP-2 subunits as well as AP-2 localization and AP-2-mediated internalization of ligand complexes. Phosphorylates NUMB and regulates its cellular localization, promoting NUMB localization to endosomes. Binds to and stabilizes the activated form of NOTCH1, increases its localization in endosomes and regulates its transcriptional activity. In Rattus norvegicus (Rat), this protein is AP2-associated protein kinase 1 (Aak1).